A 115-amino-acid chain; its full sequence is Histone H2A-Bbd type 2/3 (115 aa).

Residues 1–21 (MPRRRRRRGSSGAGGRGRTCS) are disordered. The tract at residues 87–115 (LLDMVVHNDRLLSTLFNTTTISQVAPGED) is docking domain.

This sequence belongs to the histone H2A family. As to quaternary structure, the nucleosome is a histone octamer containing two molecules each of H2A, H2B, H3 and H4 assembled in one H3-H4 heterotetramer and two H2A-H2B heterodimers. May be incorporated into a proportion of nucleosomes, replacing one or more H2A molecules. Present in mature sperm.

It localises to the nucleus. The protein resides in the chromosome. Its function is as follows. Atypical histone H2A which can replace conventional H2A in some nucleosomes and is associated with active transcription and mRNA processing. Nucleosomes wrap and compact DNA into chromatin, limiting DNA accessibility to the cellular machineries which require DNA as a template. Histones thereby play a central role in transcription regulation, DNA repair, DNA replication and chromosomal stability. Nucleosomes containing this histone are less rigid and organize less DNA than canonical nucleosomes in vivo. They are enriched in actively transcribed genes and associate with the elongating form of RNA polymerase. They associate with spliceosome components and are required for mRNA splicing. May participate in spermatogenesis. This Homo sapiens (Human) protein is Histone H2A-Bbd type 2/3.